Consider the following 439-residue polypeptide: Proline--tRNA ligase (439 aa).

The protein belongs to the class-II aminoacyl-tRNA synthetase family. ProS type 2 subfamily. Homodimer.

The protein localises to the cytoplasm. The catalysed reaction is tRNA(Pro) + L-proline + ATP = L-prolyl-tRNA(Pro) + AMP + diphosphate. Its function is as follows. Catalyzes the attachment of proline to tRNA(Pro) in a two-step reaction: proline is first activated by ATP to form Pro-AMP and then transferred to the acceptor end of tRNA(Pro). The chain is Proline--tRNA ligase from Beijerinckia indica subsp. indica (strain ATCC 9039 / DSM 1715 / NCIMB 8712).